The sequence spans 211 residues: MTVLLFGFEPFLEYKENPSQLIVEALNRSTILKEEVKGVILPVEYKKIEDVIVTKIRETKPILTLGIGLAPGRAKITPEKIAINYRYSREGDNAGKKYRGEKIDPLGQDGIFTNIPVEDLVDLLNENGIPAELSLSAGSYLCNNAMYIIIREARKYNSLGGFIHVPLHESYAARIQRSIPSMSLDTMIRGIKLSIEFILTNKNKKENLTLS.

Catalysis depends on residues E79, C142, and H164.

Belongs to the peptidase C15 family. In terms of assembly, homotetramer.

Its subcellular location is the cytoplasm. The catalysed reaction is Release of an N-terminal pyroglutamyl group from a polypeptide, the second amino acid generally not being Pro.. Functionally, removes 5-oxoproline from various penultimate amino acid residues except L-proline. The protein is Pyrrolidone-carboxylate peptidase 1 (pcp1) of Saccharolobus solfataricus (strain ATCC 35092 / DSM 1617 / JCM 11322 / P2) (Sulfolobus solfataricus).